The primary structure comprises 428 residues: AP-1 complex subunit mu-1 (428 aa).

One can recognise an MHD domain in the interval 170-426 (KNEVFLDVIE…ITMAGEYELR (257 aa)).

The protein belongs to the adaptor complexes medium subunit family. Adaptor protein complex 1 (AP-1) is a heterotetramer composed of two large adaptins (gamma-type subunit and beta-type subunit), a medium adaptin (mu-type subunit) and a small adaptin (sigma-type subunit).

Its subcellular location is the golgi apparatus. It localises to the cytoplasmic vesicle. It is found in the clathrin-coated vesicle membrane. Functionally, subunit of clathrin-associated adaptor protein complex 1 that plays a role in protein sorting at the trans-Golgi network and early endosomes (TGN/EE). The AP complexes mediate the recruitment of clathrin to membranes and the recognition of sorting signals within the cytosolic tails of transmembrane cargo molecules. Functions redundantly with AP1M2 in multiple post-Golgi trafficking pathways leading from the TGN to the vacuole, the plasma membrane, and the cell-division plane. The sequence is that of AP-1 complex subunit mu-1 (AP1M1) from Arabidopsis thaliana (Mouse-ear cress).